A 90-amino-acid polypeptide reads, in one-letter code: Small ribosomal subunit protein bS20 (90 aa).

The segment covering 1 to 10 (MANHKSTQKS) has biased composition (polar residues). The interval 1–25 (MANHKSTQKSIRQDQKRNLINKSRK) is disordered.

Belongs to the bacterial ribosomal protein bS20 family.

Binds directly to 16S ribosomal RNA. This is Small ribosomal subunit protein bS20 from Orientia tsutsugamushi (strain Ikeda) (Rickettsia tsutsugamushi).